The following is a 218-amino-acid chain: Ras-related protein R-Ras (218 aa).

Positions 1-30 (MSSGAASGTGRGRPRGGGPGPGDPPPSETH) are disordered. Positions 7–20 (SGTGRGRPRGGGPG) are enriched in gly residues. 36–44 (GGGGVGKSA) is a binding site for GTP. The Effector region motif lies at 58-66 (YDPTIEDSY). GTP-binding positions include 83–87 (DTAGQ), 142–145 (NKAD), and 172–174 (SAK). Cysteine 215 bears the Cysteine methyl ester mark. A lipid anchor (S-geranylgeranyl cysteine) is attached at cysteine 215. The propeptide at 216–218 (VLL) is removed in mature form.

This sequence belongs to the small GTPase superfamily. Ras family. In terms of assembly, interacts with PLCE1. Interacts (active GTP-bound form preferentially) with RGS14. Interacts with OSBPL3. Interacts with ZDHHC19. Post-translationally, S-palmitoylated by ZDHHC19, leading to increased association with membranes and with rafts/caveolae as well as enhanced cell viability.

It localises to the cell membrane. It catalyses the reaction GTP + H2O = GDP + phosphate + H(+). In terms of biological role, GTP-binding protein with GTPase activity, likely involved in the regulation of MAPK signaling pathway and thereby controlling multiple cellular processes. Regulates the organization of the actin cytoskeleton. With OSPBL3, modulates integrin beta-1 (ITGB1) activity. This is Ras-related protein R-Ras (RRAS) from Homo sapiens (Human).